The following is a 188-amino-acid chain: uncharacterized protein (188 aa).

The segment covering 1–15 (MVSSKDKIKEELKQE) has biased composition (basic and acidic residues). A disordered region spans residues 1–21 (MVSSKDKIKEELKQEEPEENV).

This is an uncharacterized protein from Saccharolobus islandicus (Sulfolobus islandicus).